Here is a 518-residue protein sequence, read N- to C-terminus: GMP synthase [glutamine-hydrolyzing] (518 aa).

Residues 8–201 enclose the Glutamine amidotransferase type-1 domain; sequence TVLIIDFGSQ…VHKISGLKGN (194 aa). The active-site Nucleophile is Cys-85. Catalysis depends on residues His-175 and Glu-177. The GMPS ATP-PPase domain occupies 202–393; the sequence is WSMASYRDQA…LGLPEQFLGR (192 aa). 229-235 is a binding site for ATP; sequence SGGVDSS.

Homodimer.

It carries out the reaction XMP + L-glutamine + ATP + H2O = GMP + L-glutamate + AMP + diphosphate + 2 H(+). It participates in purine metabolism; GMP biosynthesis; GMP from XMP (L-Gln route): step 1/1. Catalyzes the synthesis of GMP from XMP. The protein is GMP synthase [glutamine-hydrolyzing] of Bartonella quintana (strain Toulouse) (Rochalimaea quintana).